A 387-amino-acid chain; its full sequence is Succinate--CoA ligase [ADP-forming] subunit beta (387 aa).

The region spanning Arg-9 to Lys-236 is the ATP-grasp domain. ATP is bound by residues Lys-45, Gly-52–Gly-54, Ala-94, and Glu-99. Asn-191 and Asp-205 together coordinate Mg(2+). Substrate contacts are provided by residues Asn-256 and Gly-318–Thr-320.

The protein belongs to the succinate/malate CoA ligase beta subunit family. In terms of assembly, heterotetramer of two alpha and two beta subunits. Mg(2+) is required as a cofactor.

The catalysed reaction is succinate + ATP + CoA = succinyl-CoA + ADP + phosphate. The enzyme catalyses GTP + succinate + CoA = succinyl-CoA + GDP + phosphate. It participates in carbohydrate metabolism; tricarboxylic acid cycle; succinate from succinyl-CoA (ligase route): step 1/1. Succinyl-CoA synthetase functions in the citric acid cycle (TCA), coupling the hydrolysis of succinyl-CoA to the synthesis of either ATP or GTP and thus represents the only step of substrate-level phosphorylation in the TCA. The beta subunit provides nucleotide specificity of the enzyme and binds the substrate succinate, while the binding sites for coenzyme A and phosphate are found in the alpha subunit. This is Succinate--CoA ligase [ADP-forming] subunit beta from Clavibacter michiganensis subsp. michiganensis (strain NCPPB 382).